The sequence spans 94 residues: MRLKPLGDRVVVKVIQAEEVTKGGVILPGTAKEKPQQGEVVAVGTGQYIDGKKVELEVKVGDRVIFSKYAGTEVKLDGEEYLLLRESDILAIIE.

This sequence belongs to the GroES chaperonin family. In terms of assembly, heptamer of 7 subunits arranged in a ring. Interacts with the chaperonin GroEL.

It is found in the cytoplasm. Its function is as follows. Together with the chaperonin GroEL, plays an essential role in assisting protein folding. The GroEL-GroES system forms a nano-cage that allows encapsulation of the non-native substrate proteins and provides a physical environment optimized to promote and accelerate protein folding. GroES binds to the apical surface of the GroEL ring, thereby capping the opening of the GroEL channel. The polypeptide is Co-chaperonin GroES (Thermoanaerobacter pseudethanolicus (strain ATCC 33223 / 39E) (Clostridium thermohydrosulfuricum)).